A 304-amino-acid polypeptide reads, in one-letter code: uncharacterized protein (304 aa).

Residues 226–244 (SRNSESSRQSNLNSPNDSV) show a composition bias toward polar residues. The interval 226–263 (SRNSESSRQSNLNSPNDSVKFNEFNKSNKSTKTNPNNI) is disordered. The segment covering 246–262 (FNEFNKSNKSTKTNPNN) has biased composition (low complexity).

This is an uncharacterized protein from Acanthamoeba polyphaga (Amoeba).